We begin with the raw amino-acid sequence, 140 residues long: UPF0134 protein MPN_094 (140 aa).

It belongs to the UPF0134 family.

The protein is UPF0134 protein MPN_094 of Mycoplasma pneumoniae (strain ATCC 29342 / M129 / Subtype 1) (Mycoplasmoides pneumoniae).